The sequence spans 489 residues: Betaine aldehyde dehydrogenase (489 aa).

Residues Thr26 and Asp93 each contribute to the K(+) site. 150-152 lines the NAD(+) pocket; the sequence is GAW. Catalysis depends on Lys162, which acts as the Charge relay system. NAD(+) is bound at residue 176 to 179; the sequence is KPSE. Residue Val180 participates in K(+) binding. NAD(+) is bound at residue 229 to 232; it reads GVET. Leu245 contributes to the K(+) binding site. Glu251 serves as the catalytic Proton acceptor. Gly253, Cys285, and Glu386 together coordinate NAD(+). Cys285 serves as the catalytic Nucleophile. Cys285 bears the Cysteine sulfenic acid (-SOH) mark. Positions 456 and 459 each coordinate K(+). The active-site Charge relay system is the Glu463.

This sequence belongs to the aldehyde dehydrogenase family. As to quaternary structure, dimer of dimers. The cofactor is K(+).

The enzyme catalyses betaine aldehyde + NAD(+) + H2O = glycine betaine + NADH + 2 H(+). It functions in the pathway amine and polyamine biosynthesis; betaine biosynthesis via choline pathway; betaine from betaine aldehyde: step 1/1. In terms of biological role, involved in the biosynthesis of the osmoprotectant glycine betaine. Catalyzes the irreversible oxidation of betaine aldehyde to the corresponding acid. This chain is Betaine aldehyde dehydrogenase, found in Burkholderia mallei (strain SAVP1).